Consider the following 908-residue polypeptide: DNA mismatch repair protein MutS (908 aa).

629–636 provides a ligand contact to ATP; that stretch reads GPNMAGKS. The segment at 822-863 is disordered; the sequence is ADEADGAPSEDPPSEDPPSGDGVRAKKGEADAVPDLEDSQAN.

It belongs to the DNA mismatch repair MutS family.

This protein is involved in the repair of mismatches in DNA. It is possible that it carries out the mismatch recognition step. This protein has a weak ATPase activity. The chain is DNA mismatch repair protein MutS from Salinibacter ruber (strain DSM 13855 / M31).